A 645-amino-acid chain; its full sequence is DNA mismatch repair protein MutL (645 aa).

This sequence belongs to the DNA mismatch repair MutL/HexB family.

This protein is involved in the repair of mismatches in DNA. It is required for dam-dependent methyl-directed DNA mismatch repair. May act as a 'molecular matchmaker', a protein that promotes the formation of a stable complex between two or more DNA-binding proteins in an ATP-dependent manner without itself being part of a final effector complex. This is DNA mismatch repair protein MutL from Geobacillus thermodenitrificans (strain NG80-2).